A 340-amino-acid polypeptide reads, in one-letter code: GTPase Obg (340 aa).

The 159-residue stretch at 1–159 folds into the Obg domain; that stretch reads MGFIDEVKLC…KHVLLKLKVL (159 aa). Residues 160–329 enclose the OBG-type G domain; that stretch reads SDVGIIGMPN…LSEKLKKSNS (170 aa). GTP is bound by residues 166–173, 191–195, 212–215, 279–282, and 310–312; these read GMPNAGKS, FTTVR, DIPG, NKCD, and NGD. Ser173 and Thr193 together coordinate Mg(2+).

It belongs to the TRAFAC class OBG-HflX-like GTPase superfamily. OBG GTPase family. In terms of assembly, monomer. Requires Mg(2+) as cofactor.

Its subcellular location is the cytoplasm. Its function is as follows. An essential GTPase which binds GTP, GDP and possibly (p)ppGpp with moderate affinity, with high nucleotide exchange rates and a fairly low GTP hydrolysis rate. Plays a role in control of the cell cycle, stress response, ribosome biogenesis and in those bacteria that undergo differentiation, in morphogenesis control. The chain is GTPase Obg from Wolbachia sp. subsp. Drosophila simulans (strain wRi).